The primary structure comprises 744 residues: Phosphoribosylformylglycinamidine synthase subunit PurL (744 aa).

His-50 is a catalytic residue. ATP-binding residues include Tyr-53 and Lys-92. Position 94 (Glu-94) interacts with Mg(2+). Substrate-binding positions include 95-98 (SHNH) and Arg-117. His-96 functions as the Proton acceptor in the catalytic mechanism. Asp-118 contributes to the Mg(2+) binding site. Gln-241 provides a ligand contact to substrate. Asp-269 contacts Mg(2+). Residue 313-315 (ESQ) coordinates substrate. Positions 495 and 532 each coordinate ATP. Asn-533 provides a ligand contact to Mg(2+). Position 535 (Ser-535) interacts with substrate.

This sequence belongs to the FGAMS family. As to quaternary structure, monomer. Part of the FGAM synthase complex composed of 1 PurL, 1 PurQ and 2 PurS subunits.

It localises to the cytoplasm. It catalyses the reaction N(2)-formyl-N(1)-(5-phospho-beta-D-ribosyl)glycinamide + L-glutamine + ATP + H2O = 2-formamido-N(1)-(5-O-phospho-beta-D-ribosyl)acetamidine + L-glutamate + ADP + phosphate + H(+). It participates in purine metabolism; IMP biosynthesis via de novo pathway; 5-amino-1-(5-phospho-D-ribosyl)imidazole from N(2)-formyl-N(1)-(5-phospho-D-ribosyl)glycinamide: step 1/2. In terms of biological role, part of the phosphoribosylformylglycinamidine synthase complex involved in the purines biosynthetic pathway. Catalyzes the ATP-dependent conversion of formylglycinamide ribonucleotide (FGAR) and glutamine to yield formylglycinamidine ribonucleotide (FGAM) and glutamate. The FGAM synthase complex is composed of three subunits. PurQ produces an ammonia molecule by converting glutamine to glutamate. PurL transfers the ammonia molecule to FGAR to form FGAM in an ATP-dependent manner. PurS interacts with PurQ and PurL and is thought to assist in the transfer of the ammonia molecule from PurQ to PurL. This chain is Phosphoribosylformylglycinamidine synthase subunit PurL, found in Rhizobium johnstonii (strain DSM 114642 / LMG 32736 / 3841) (Rhizobium leguminosarum bv. viciae).